We begin with the raw amino-acid sequence, 70 residues long: Uteroglobin (70 aa).

It belongs to the secretoglobin family. In terms of assembly, antiparallel homodimer; disulfide-linked. Interaction with LMBR1L is controversial. In terms of tissue distribution, club cells (nonciliated cells of the surface epithelium of the pulmonary airways).

The protein localises to the secreted. Functionally, binds phosphatidylcholine, phosphatidylinositol, polychlorinated biphenyls (PCB) and weakly progesterone, potent inhibitor of phospholipase A2. This chain is Uteroglobin (SCGB1A1), found in Macaca fuscata fuscata (Japanese macaque).